The sequence spans 695 residues: Elongation factor G (695 aa).

Residues 8 to 282 (KDTRNIGIMA…AIVDYMPAPI (275 aa)) enclose the tr-type G domain. Residues 17–24 (AHIDAGKT), 81–85 (DTPGH), and 135–138 (NKMD) contribute to the GTP site. A disordered region spans residues 285 to 304 (PDIKGVDPQTDEPTTRKSSD).

The protein belongs to the TRAFAC class translation factor GTPase superfamily. Classic translation factor GTPase family. EF-G/EF-2 subfamily.

The protein localises to the cytoplasm. Its function is as follows. Catalyzes the GTP-dependent ribosomal translocation step during translation elongation. During this step, the ribosome changes from the pre-translocational (PRE) to the post-translocational (POST) state as the newly formed A-site-bound peptidyl-tRNA and P-site-bound deacylated tRNA move to the P and E sites, respectively. Catalyzes the coordinated movement of the two tRNA molecules, the mRNA and conformational changes in the ribosome. The protein is Elongation factor G of Finegoldia magna (strain ATCC 29328 / DSM 20472 / WAL 2508) (Peptostreptococcus magnus).